A 72-amino-acid chain; its full sequence is Large ribosomal subunit protein bL31 (72 aa).

Residues Cys16, Cys18, Cys38, and Cys41 each contribute to the Zn(2+) site.

Belongs to the bacterial ribosomal protein bL31 family. Type A subfamily. Part of the 50S ribosomal subunit. Zn(2+) serves as cofactor.

Functionally, binds the 23S rRNA. The sequence is that of Large ribosomal subunit protein bL31 from Vibrio campbellii (strain ATCC BAA-1116).